A 490-amino-acid polypeptide reads, in one-letter code: ABC transporter ATP-binding protein ModF (490 aa).

ABC transporter domains are found at residues 4–235 (LQIL…AHSE) and 261–489 (IVLN…LTKI). ATP-binding positions include 36–43 (GSNGSGKS) and 293–300 (GPNGAGKS).

It belongs to the ABC transporter superfamily.

It localises to the cell inner membrane. Its function is as follows. Probably not involved in the transport of molybdenum into the cell. The sequence is that of ABC transporter ATP-binding protein ModF (modF) from Escherichia coli (strain K12).